Consider the following 406-residue polypeptide: MRATDRMGARAVSKLRLALLFVLVLGTPRSGVQGEDGLDFPEYDGVDRVINVNAKNYKNVFKKYEVLALLYHEPPEDDKASQRQFEMEELILELAAQVLEDKGVGFGLVDSEKDAAVAKKLGLTEEDSVYVFKGDEVIEYDGEFSADTLVEFLLDVLEDPVELIEGERELQAFENIEDEIKLIGYFKSKDSEHYKAYEDAAEEFHPYIPFFATFDSKVAKKLTLKLNEIDFYEAFMEEPVTIPDKPNSEEEIVSFVEEHRRSTLRKLKPESMYETWEDDLDGIHIVAFAEEADPDGYEFLETLKAVAQDNTENPDLSIIWIDPDDFPLLVPYWEKTFDIDLSAPQIGVVNVTDADSIWMEMDDEEDLPSAEELEDWLEDVLEGEINTEDDDDDDDDDDDDDDDDDD.

The signal sequence occupies residues 1-34 (MRATDRMGARAVSKLRLALLFVLVLGTPRSGVQG). Tyr-43 bears the Phosphotyrosine mark. Ser-81 carries the phosphoserine modification. Thr-124 is subject to Phosphothreonine. Ser-216 carries the phosphoserine modification. A glycan (N-linked (GlcNAc...) asparagine) is linked at Asn-350. A disordered region spans residues 382 to 406 (EGEINTEDDDDDDDDDDDDDDDDDD).

This sequence belongs to the calsequestrin family. In terms of assembly, monomer; increases in response to a depletion of intracellular calcium. Homodimer. Homotetramer and homopolymer. Can form linear homooligomers. Ca(2+) ions promote oligomerization. Interacts (via C-terminal end and preferentially with the monomeric form) with STIM1; this interaction increases in response to a depletion of intracellular calcium, decreases both STIM1 aggregation and clustering, interaction of STIM1 with ORAI1 and store-operated Ca(2+) entry (SOCE) activity. Interacts with ASPH and TRDN. N-glycosylated. Detected in skeletal muscle and in smooth muscle from vas deferens, aorta and stomach (at protein level).

The protein localises to the endoplasmic reticulum. Its subcellular location is the sarcoplasmic reticulum. It is found in the sarcoplasmic reticulum lumen. It localises to the sarcoplasmic reticulum membrane. The protein resides in the mitochondrion matrix. Calsequestrin is a high-capacity, moderate affinity, calcium-binding protein and thus acts as an internal calcium store in muscle. Calcium ions are bound by clusters of acidic residues at the protein surface, often at the interface between subunits. Can bind around 80 Ca(2+) ions. Regulates the release of lumenal Ca(2+) via the calcium release channel RYR1; this plays an important role in triggering muscle contraction. Negatively regulates store-operated Ca(2+) entry (SOCE) activity. This is Calsequestrin-1 (Casq1) from Rattus norvegicus (Rat).